Consider the following 300-residue polypeptide: Protoheme IX farnesyltransferase (300 aa).

Transmembrane regions (helical) follow at residues 31-51 (VMSL…NSLH), 52-72 (PFIS…AGAI), 92-112 (IVRG…MAFF), 123-145 (FLSA…MWLK), 152-172 (IVIG…SVSG), 179-199 (VILF…LALF), 225-245 (ILIY…VGMS), 247-267 (IIYL…SISL), and 280-300 (FFAY…FCRV).

This sequence belongs to the UbiA prenyltransferase family. Protoheme IX farnesyltransferase subfamily.

It localises to the cell inner membrane. The catalysed reaction is heme b + (2E,6E)-farnesyl diphosphate + H2O = Fe(II)-heme o + diphosphate. Its pathway is porphyrin-containing compound metabolism; heme O biosynthesis; heme O from protoheme: step 1/1. Functionally, converts heme B (protoheme IX) to heme O by substitution of the vinyl group on carbon 2 of heme B porphyrin ring with a hydroxyethyl farnesyl side group. This is Protoheme IX farnesyltransferase from Rickettsia bellii (strain OSU 85-389).